The sequence spans 345 residues: Baculoviral IAP repeat-containing protein 7-B (345 aa).

BIR repeat units lie at residues 46 to 112 (RQRS…PFLQ) and 154 to 219 (RLGS…DFLL). Zn(2+) is bound by residues cysteine 188, cysteine 191, histidine 208, and cysteine 215. Serine 237 carries the post-translational modification Phosphoserine. At serine 241 the chain carries Phosphoserine; by MAPK1. A Phosphoserine modification is found at serine 253. The residue at position 257 (serine 257) is a Phosphoserine; by MAPK1. The tract at residues 258-286 (TESVSVPRAPTPGERSEPPKVSGPPLSTE) is disordered. The RING-type zinc-finger motif lies at 298 to 333 (CKVCMDKDVSMLFVPCGHLVVCTECAPNLRHCPICR).

Belongs to the IAP family. Post-translationally, auto-ubiquitinated, and degraded in a 2-step mechanism; a caspase-independent first step and a caspase-dependent second step. In terms of processing, phosphorylated via MAPK-dependent and CDK-dependent pathways during oocyte maturation. Phosphorylation does not appear to affect caspase inhibition or autoubiquitination activity.

It is found in the cytoplasm. The catalysed reaction is S-ubiquitinyl-[E2 ubiquitin-conjugating enzyme]-L-cysteine + [acceptor protein]-L-lysine = [E2 ubiquitin-conjugating enzyme]-L-cysteine + N(6)-ubiquitinyl-[acceptor protein]-L-lysine.. Its function is as follows. Weak apoptotic suppressor. Has E3 ubiquitin-protein ligase activity. Weak inhibitor of caspase activity. This chain is Baculoviral IAP repeat-containing protein 7-B (birc7-b), found in Xenopus laevis (African clawed frog).